The chain runs to 320 residues: Aspartate carbamoyltransferase catalytic subunit (320 aa).

Arginine 68 and threonine 69 together coordinate carbamoyl phosphate. Lysine 96 provides a ligand contact to L-aspartate. 3 residues coordinate carbamoyl phosphate: arginine 118, histidine 148, and glutamine 151. L-aspartate contacts are provided by arginine 181 and arginine 236. Glycine 277 and proline 278 together coordinate carbamoyl phosphate.

It belongs to the aspartate/ornithine carbamoyltransferase superfamily. ATCase family. As to quaternary structure, heterododecamer (2C3:3R2) of six catalytic PyrB chains organized as two trimers (C3), and six regulatory PyrI chains organized as three dimers (R2).

It carries out the reaction carbamoyl phosphate + L-aspartate = N-carbamoyl-L-aspartate + phosphate + H(+). The protein operates within pyrimidine metabolism; UMP biosynthesis via de novo pathway; (S)-dihydroorotate from bicarbonate: step 2/3. Functionally, catalyzes the condensation of carbamoyl phosphate and aspartate to form carbamoyl aspartate and inorganic phosphate, the committed step in the de novo pyrimidine nucleotide biosynthesis pathway. This Delftia acidovorans (strain DSM 14801 / SPH-1) protein is Aspartate carbamoyltransferase catalytic subunit.